Reading from the N-terminus, the 358-residue chain is Methylthioribose-1-phosphate isomerase (358 aa).

Residues 54–56 (RGA), R96, and Q205 contribute to the substrate site. D246 (proton donor) is an active-site residue. 256-257 (GK) provides a ligand contact to substrate.

This sequence belongs to the eIF-2B alpha/beta/delta subunits family. MtnA subfamily.

The catalysed reaction is 5-(methylsulfanyl)-alpha-D-ribose 1-phosphate = 5-(methylsulfanyl)-D-ribulose 1-phosphate. Its pathway is amino-acid biosynthesis; L-methionine biosynthesis via salvage pathway; L-methionine from S-methyl-5-thio-alpha-D-ribose 1-phosphate: step 1/6. Its function is as follows. Catalyzes the interconversion of methylthioribose-1-phosphate (MTR-1-P) into methylthioribulose-1-phosphate (MTRu-1-P). The protein is Methylthioribose-1-phosphate isomerase of Pseudomonas putida (strain ATCC 47054 / DSM 6125 / CFBP 8728 / NCIMB 11950 / KT2440).